A 376-amino-acid polypeptide reads, in one-letter code: tRNA-specific 2-thiouridylase MnmA (376 aa).

ATP contacts are provided by residues 14 to 21 (GMSGGVDS) and methionine 40. An interaction with target base in tRNA region spans residues 100-102 (NPD). Residue cysteine 105 is the Nucleophile of the active site. Cysteine 105 and cysteine 202 are oxidised to a cystine. Residue glycine 129 participates in ATP binding. The tract at residues 152–154 (KDQ) is interaction with tRNA. Cysteine 202 acts as the Cysteine persulfide intermediate in catalysis. The segment at 315-316 (RY) is interaction with tRNA.

The protein belongs to the MnmA/TRMU family.

It is found in the cytoplasm. The catalysed reaction is S-sulfanyl-L-cysteinyl-[protein] + uridine(34) in tRNA + AH2 + ATP = 2-thiouridine(34) in tRNA + L-cysteinyl-[protein] + A + AMP + diphosphate + H(+). Catalyzes the 2-thiolation of uridine at the wobble position (U34) of tRNA, leading to the formation of s(2)U34. The polypeptide is tRNA-specific 2-thiouridylase MnmA (Lactococcus lactis subsp. cremoris (strain SK11)).